The sequence spans 253 residues: Pupal cuticle protein (253 aa).

The first 18 residues, 1-18 (MKSMIVVACLALACGAHA), serve as a signal peptide directing secretion. Residues 54 to 66 (LQQASKNNPNPND) are compositionally biased toward polar residues. The tract at residues 54–74 (LQQASKNNPNPNDDGSYDPRW) is disordered. 3 tandem repeats follow at residues 97 to 100 (AAPA), 115 to 118 (AAPA), and 154 to 157 (AAPA). Residues 155–167 (APAQQQWNAPAHQ) show a composition bias toward low complexity. Disordered regions lie at residues 155–178 (APAQ…QDWN) and 187–206 (APAH…APAH). Positions 189 to 201 (AHQSWNGAPSWQS) are enriched in polar residues.

Its function is as follows. Component of the cuticle of the pupae of silk moth. The polypeptide is Pupal cuticle protein (PCP) (Bombyx mori (Silk moth)).